Consider the following 289-residue polypeptide: 4-hydroxy-tetrahydrodipicolinate synthase (289 aa).

T43 lines the pyruvate pocket. The active-site Proton donor/acceptor is the Y131. The Schiff-base intermediate with substrate role is filled by K160. Residue V200 coordinates pyruvate.

This sequence belongs to the DapA family. As to quaternary structure, homotetramer; dimer of dimers.

Its subcellular location is the cytoplasm. The catalysed reaction is L-aspartate 4-semialdehyde + pyruvate = (2S,4S)-4-hydroxy-2,3,4,5-tetrahydrodipicolinate + H2O + H(+). Its pathway is amino-acid biosynthesis; L-lysine biosynthesis via DAP pathway; (S)-tetrahydrodipicolinate from L-aspartate: step 3/4. Its function is as follows. Catalyzes the condensation of (S)-aspartate-beta-semialdehyde [(S)-ASA] and pyruvate to 4-hydroxy-tetrahydrodipicolinate (HTPA). This chain is 4-hydroxy-tetrahydrodipicolinate synthase, found in Methanococcus maripaludis (strain C6 / ATCC BAA-1332).